A 98-amino-acid chain; its full sequence is Large ribosomal subunit protein uL23 (98 aa).

This sequence belongs to the universal ribosomal protein uL23 family. As to quaternary structure, part of the 50S ribosomal subunit. Contacts protein L29, and trigger factor when it is bound to the ribosome.

Its function is as follows. One of the early assembly proteins it binds 23S rRNA. One of the proteins that surrounds the polypeptide exit tunnel on the outside of the ribosome. Forms the main docking site for trigger factor binding to the ribosome. The protein is Large ribosomal subunit protein uL23 of Methylobacterium nodulans (strain LMG 21967 / CNCM I-2342 / ORS 2060).